Consider the following 340-residue polypeptide: Lipoate--protein ligase 2 (340 aa).

Residues 31–222 (FLDEDILFPY…QILGIDDIKE (192 aa)) form the BPL/LPL catalytic domain. ATP-binding positions include Arg73, 78 to 81 (GAVY), Lys136, and Ala140. (R)-lipoate is bound at residue Lys136. Residues 293–321 (QGDIKDVEEALQGTKMTREDLMHQLKQLD) are a coiled coil.

The protein belongs to the LplA family.

The catalysed reaction is L-lysyl-[lipoyl-carrier protein] + (R)-lipoate + ATP = N(6)-[(R)-lipoyl]-L-lysyl-[lipoyl-carrier protein] + AMP + diphosphate + H(+). The protein operates within protein modification; protein lipoylation via exogenous pathway; protein N(6)-(lipoyl)lysine from lipoate: step 1/2. Its pathway is protein modification; protein lipoylation via exogenous pathway; protein N(6)-(lipoyl)lysine from lipoate: step 2/2. Functionally, catalyzes specifically the lipoylation of GcvH-L (SAV0324), likely via the ATP-dependent activation of lipoate to lipoyl-AMP and the transfer of the activated lipoyl onto the lipoyl domain of the target protein. Can also utilize lipoamide as substrate for GcvH-L modification. This chain is Lipoate--protein ligase 2, found in Staphylococcus aureus (strain Mu50 / ATCC 700699).